Here is a 70-residue protein sequence, read N- to C-terminus: Large ribosomal subunit protein bL31 (70 aa).

Zn(2+) contacts are provided by Cys17, Cys19, Cys37, and Cys40.

It belongs to the bacterial ribosomal protein bL31 family. Type A subfamily. As to quaternary structure, part of the 50S ribosomal subunit. Zn(2+) serves as cofactor.

In terms of biological role, binds the 23S rRNA. The polypeptide is Large ribosomal subunit protein bL31 (Clostridium kluyveri (strain NBRC 12016)).